Here is a 432-residue protein sequence, read N- to C-terminus: Adenylosuccinate synthetase (432 aa).

Residues 12 to 18 and 40 to 42 each bind GTP; these read GDEGKGK and GHT. Asp-13 (proton acceptor) is an active-site residue. The Mg(2+) site is built by Asp-13 and Gly-40. IMP-binding positions include 13-16, 38-41, Thr-128, Arg-142, Gln-223, Thr-238, and Arg-302; these read DEGK and NAGH. The active-site Proton donor is His-41. 298–304 provides a ligand contact to substrate; the sequence is TTTGRPR. GTP contacts are provided by residues Arg-304, 330-332, and 417-419; these read HLD and GVG.

Belongs to the adenylosuccinate synthetase family. As to quaternary structure, homodimer. Mg(2+) is required as a cofactor.

Its subcellular location is the cytoplasm. The enzyme catalyses IMP + L-aspartate + GTP = N(6)-(1,2-dicarboxyethyl)-AMP + GDP + phosphate + 2 H(+). It participates in purine metabolism; AMP biosynthesis via de novo pathway; AMP from IMP: step 1/2. Plays an important role in the de novo pathway of purine nucleotide biosynthesis. Catalyzes the first committed step in the biosynthesis of AMP from IMP. The sequence is that of Adenylosuccinate synthetase from Symbiobacterium thermophilum (strain DSM 24528 / JCM 14929 / IAM 14863 / T).